Reading from the N-terminus, the 209-residue chain is Large ribosomal subunit protein uL3 (209 aa).

The tract at residues 128–154 is disordered; it reads QQRGPMTHGSKFHRAPGSMGASSDPSR.

The protein belongs to the universal ribosomal protein uL3 family. As to quaternary structure, part of the 50S ribosomal subunit. Forms a cluster with proteins L14 and L19.

Its function is as follows. One of the primary rRNA binding proteins, it binds directly near the 3'-end of the 23S rRNA, where it nucleates assembly of the 50S subunit. In Clostridium beijerinckii (strain ATCC 51743 / NCIMB 8052) (Clostridium acetobutylicum), this protein is Large ribosomal subunit protein uL3.